The sequence spans 223 residues: Ribose-5-phosphate isomerase A (223 aa).

Residues T29–T32, D82–D85, and K95–G98 contribute to the substrate site. E104 (proton acceptor) is an active-site residue. A substrate-binding site is contributed by K122.

Belongs to the ribose 5-phosphate isomerase family. As to quaternary structure, homodimer.

The enzyme catalyses aldehydo-D-ribose 5-phosphate = D-ribulose 5-phosphate. It participates in carbohydrate degradation; pentose phosphate pathway; D-ribose 5-phosphate from D-ribulose 5-phosphate (non-oxidative stage): step 1/1. Its function is as follows. Catalyzes the reversible conversion of ribose-5-phosphate to ribulose 5-phosphate. The chain is Ribose-5-phosphate isomerase A from Neisseria meningitidis serogroup C (strain 053442).